The chain runs to 527 residues: Arginine--tRNA ligase (527 aa).

Positions 112–122 (ANPTGPLHIGH) match the 'HIGH' region motif.

The protein belongs to the class-I aminoacyl-tRNA synthetase family. In terms of assembly, monomer.

The protein resides in the cytoplasm. It carries out the reaction tRNA(Arg) + L-arginine + ATP = L-arginyl-tRNA(Arg) + AMP + diphosphate. This chain is Arginine--tRNA ligase, found in Nitratiruptor sp. (strain SB155-2).